The chain runs to 380 residues: Queuine tRNA-ribosyltransferase (380 aa).

The active-site Proton acceptor is the aspartate 89. Substrate contacts are provided by residues aspartate 89–phenylalanine 93, aspartate 143, glutamine 187, and glycine 214. Residues glycine 245–aspartate 251 are RNA binding. Residue aspartate 264 is the Nucleophile of the active site. The segment at threonine 269–arginine 273 is RNA binding; important for wobble base 34 recognition. Residues cysteine 302, cysteine 304, cysteine 307, and histidine 333 each coordinate Zn(2+).

The protein belongs to the queuine tRNA-ribosyltransferase family. As to quaternary structure, homodimer. Within each dimer, one monomer is responsible for RNA recognition and catalysis, while the other monomer binds to the replacement base PreQ1. Zn(2+) serves as cofactor.

The enzyme catalyses 7-aminomethyl-7-carbaguanine + guanosine(34) in tRNA = 7-aminomethyl-7-carbaguanosine(34) in tRNA + guanine. It participates in tRNA modification; tRNA-queuosine biosynthesis. Functionally, catalyzes the base-exchange of a guanine (G) residue with the queuine precursor 7-aminomethyl-7-deazaguanine (PreQ1) at position 34 (anticodon wobble position) in tRNAs with GU(N) anticodons (tRNA-Asp, -Asn, -His and -Tyr). Catalysis occurs through a double-displacement mechanism. The nucleophile active site attacks the C1' of nucleotide 34 to detach the guanine base from the RNA, forming a covalent enzyme-RNA intermediate. The proton acceptor active site deprotonates the incoming PreQ1, allowing a nucleophilic attack on the C1' of the ribose to form the product. After dissociation, two additional enzymatic reactions on the tRNA convert PreQ1 to queuine (Q), resulting in the hypermodified nucleoside queuosine (7-(((4,5-cis-dihydroxy-2-cyclopenten-1-yl)amino)methyl)-7-deazaguanosine). The sequence is that of Queuine tRNA-ribosyltransferase from Proteus mirabilis (strain HI4320).